The chain runs to 518 residues: Allene oxide synthase, chloroplastic (518 aa).

The transit peptide at 1-33 (MASISTPFPISLHPKTVRSKPLKFRVLTRPIKA) directs the protein to the chloroplast. Residues Lys133, His164, and Lys168 each contribute to the heme b site. Residues Asn321 and Thr389 each contribute to the (13S)-hydroperoxy-(9Z,11E)-octadecadienoate site. Residues Asn321 and Thr389 each coordinate (13S)-hydroperoxy-(9Z,11E,15Z)-octadecatrienoate. 2 residues coordinate heme b: Lys469 and Cys471.

It belongs to the cytochrome P450 family. Heme b is required as a cofactor.

The protein resides in the plastid. It is found in the chloroplast. The protein localises to the plastoglobule. The catalysed reaction is (13S)-hydroperoxy-(9Z,11E,15Z)-octadecatrienoate = (9Z,13S,15Z)-12,13-epoxyoctadeca-9,11,15-trienoate + H2O. It carries out the reaction (13S)-hydroperoxy-(9Z,11E)-octadecadienoate = (9Z,13S)-12,13-epoxyoctadeca-9,11-dienoate + H2O. Its pathway is lipid metabolism; oxylipin biosynthesis. Its function is as follows. Cytochrome P450 enzyme involved in the biosynthesis of oxylipin jasmonates, important phytohormones acting as growth regulators and signaling molecules for plant defense. Functions as an allene oxide synthase that converts hydroperoxy fatty acids to unstable allene epoxides. Catalyzes the dehydration of 13-HPOTE ((13S)-hydroperoxy-(9Z,11E,15Z)-octadecatrienoate), as well as 13-HPODE ((13S)-hydroperoxy-(9Z,11E)-octadecadienoate). In Arabidopsis thaliana (Mouse-ear cress), this protein is Allene oxide synthase, chloroplastic (CYP74A).